We begin with the raw amino-acid sequence, 164 residues long: HTH-type transcriptional regulator IscR (164 aa).

Residues 2–131 (RLTSKGRYAV…NNITLAELVN (130 aa)) enclose the HTH rrf2-type domain. Positions 28-51 (LADISERQGISLSYLEQLFSRLRK) form a DNA-binding region, H-T-H motif. 3 residues coordinate [2Fe-2S] cluster: C92, C98, and C104. A disordered region spans residues 143 to 164 (NNDTRRTANGRPQETINVNLRA). Polar residues predominate over residues 152–164 (GRPQETINVNLRA).

[2Fe-2S] cluster serves as cofactor.

In terms of biological role, regulates the transcription of several operons and genes involved in the biogenesis of Fe-S clusters and Fe-S-containing proteins. This is HTH-type transcriptional regulator IscR from Yersinia enterocolitica serotype O:8 / biotype 1B (strain NCTC 13174 / 8081).